The following is a 321-amino-acid chain: Putative zinc finger CCCH domain-containing protein 9 (321 aa).

Disordered stretches follow at residues 1–59 (MADA…PGKK) and 181–269 (REAE…NLQE). Positions 10 to 29 (EAERRSDETESRSIKEPKEK) are enriched in basic and acidic residues. Residues 55-83 (RPGKKDCQFYLKNGLCRYRSSCRFNHPTQ) form a C3H1-type zinc finger. Positions 164–290 (TEWRFERERM…EARLRLEQIR (127 aa)) form a coiled coil. 2 stretches are compositionally biased toward basic and acidic residues: residues 181 to 224 (REAE…REAQ) and 231 to 244 (RQRDSIERQRREAQ).

This chain is Putative zinc finger CCCH domain-containing protein 9, found in Arabidopsis thaliana (Mouse-ear cress).